The primary structure comprises 227 residues: Phosphoglycolate phosphatase (227 aa).

Residue aspartate 9 is the Nucleophile of the active site. Mg(2+) is bound by residues aspartate 9, aspartate 11, and aspartate 171.

This sequence belongs to the HAD-like hydrolase superfamily. CbbY/CbbZ/Gph/YieH family. Requires Mg(2+) as cofactor.

The catalysed reaction is 2-phosphoglycolate + H2O = glycolate + phosphate. It participates in organic acid metabolism; glycolate biosynthesis; glycolate from 2-phosphoglycolate: step 1/1. In terms of biological role, specifically catalyzes the dephosphorylation of 2-phosphoglycolate. Is involved in the dissimilation of the intracellular 2-phosphoglycolate formed during the DNA repair of 3'-phosphoglycolate ends, a major class of DNA lesions induced by oxidative stress. In Mesorhizobium japonicum (strain LMG 29417 / CECT 9101 / MAFF 303099) (Mesorhizobium loti (strain MAFF 303099)), this protein is Phosphoglycolate phosphatase.